We begin with the raw amino-acid sequence, 1112 residues long: Lacto-N-biosidase (1112 aa).

The first 34 residues, 1–34, serve as a signal peptide directing secretion; the sequence is MEKSSNRRFGVRTVAAIVAGLMVGGMCTAMTASA. Cysteines 187 and 189 form a disulfide. Glutamine 190, glutamate 216, asparagine 259, aspartate 320, glutamate 321, tyrosine 419, and aspartate 467 together coordinate beta-D-galactosyl-(1-&gt;3)-N-acetyl-D-glucosamine. The active-site Proton donor/acceptor is the glutamate 321. A disulfide bridge links cysteine 564 with cysteine 589. The segment at 938-969 is disordered; that stretch reads ATPVELTEPEQPKDNPEVTETPEATGVTVSGD. In terms of domain architecture, BIG2 spans 975-1041; sequence ALSLKKGTTA…ANGKSASVTV (67 aa). Positions 1044–1061 are enriched in low complexity; sequence TEDSEVPGPTGPTEPTKP. A disordered region spans residues 1044–1081; sequence TEDSEVPGPTGPTEPTKPGTEKPTTKPTTKPNDGKLSA. A helical transmembrane segment spans residues 1086-1106; sequence TAVLATIAALFALAGGAVVAV.

This sequence belongs to the glycosyl hydrolase 20 family.

The protein localises to the cell membrane. It catalyses the reaction beta-D-Gal-(1-&gt;3)-beta-D-GlcNAc-(1-&gt;3)-beta-D-Gal-(1-&gt;4)-D-Glc + H2O = beta-D-galactosyl-(1-&gt;3)-N-acetyl-D-glucosamine + lactose. Present in the infant gut, this enzyme is involved in the assimilation of type-1 human milk oligosaccharides (HMOs). It hydrolyzes via a retaining mechanism the beta-D-GlcNAc-(1-&gt;3)-beta-D-Gal linkage in lacto-N-tetraose (LNT or beta-D-Gal-(1-&gt;3)-beta-D-GlcNAc-(1-&gt;3)-beta-D-Gal-(1-&gt;4)-D-Glc), an abundant HMO unique to human breast milk, releasing lacto-N-biose (LNB or beta-D-Gal-(1-&gt;3)-D-GlcNAc) and lactose. Is a key enzymatic factor for growth and proliferation of B.bifidum in the gut ecosystem of breast-fed infants. Has substrate preference for unmodified beta-linked LNB since it does not hydrolyze the fucosylated forms of lacto-N-tetraose (lacto-N-fucopentaose I and II) or lacto-N-neotetraose. Is also able to display transglycosylation activity in vitro. The polypeptide is Lacto-N-biosidase (Bifidobacterium bifidum (strain DSM 20082 / JCM 1254 / BCRC 11844 / KCTC 3440 / E319f (Variant a))).